A 299-amino-acid chain; its full sequence is Protease HtpX homolog (299 aa).

2 helical membrane-spanning segments follow: residues 14–34 (IVLL…VGYL) and 39–59 (LVGG…SMIF). Position 143 (H143) interacts with Zn(2+). The active site involves E144. Residue H147 coordinates Zn(2+). The next 2 membrane-spanning stretches (helical) occupy residues 158-178 (IAVA…RMMW) and 198-218 (IILL…ASLV). A Zn(2+)-binding site is contributed by E227.

It belongs to the peptidase M48B family. Zn(2+) serves as cofactor.

The protein resides in the cell membrane. The polypeptide is Protease HtpX homolog (Streptococcus mutans serotype c (strain ATCC 700610 / UA159)).